Here is a 219-residue protein sequence, read N- to C-terminus: MPPRPRFDRRAPVRELPNINDRINYPKLRVVDADGTQLGVINREEALDVAKDRELDLVLVSEKADPPVCRIMDYGKFKFEQEKKAKEAKKKSHQTEVKEVKMRYKIDQHDYNVRIGQAVRFLKAGDKVKCTVIFRGREIQHTALAETLLRRMAKDLEEQAEIQQAPKREGRNMIMFLTPRKTPLIKTDKENQIPTRAVRTITAPPRATTAAKTQLNKDQ.

It belongs to the IF-3 family. Monomer.

It is found in the cytoplasm. Its function is as follows. IF-3 binds to the 30S ribosomal subunit and shifts the equilibrium between 70S ribosomes and their 50S and 30S subunits in favor of the free subunits, thus enhancing the availability of 30S subunits on which protein synthesis initiation begins. This is Translation initiation factor IF-3 from Prochlorococcus marinus (strain MIT 9303).